The chain runs to 206 residues: FMN-dependent NADH:quinone oxidoreductase (206 aa).

Residues 15–17, 94–97, and 138–141 each bind FMN; these read SVS, MYNF, and TRGG.

The protein belongs to the azoreductase type 1 family. Homodimer. FMN is required as a cofactor.

It carries out the reaction 2 a quinone + NADH + H(+) = 2 a 1,4-benzosemiquinone + NAD(+). The catalysed reaction is N,N-dimethyl-1,4-phenylenediamine + anthranilate + 2 NAD(+) = 2-(4-dimethylaminophenyl)diazenylbenzoate + 2 NADH + 2 H(+). In terms of biological role, quinone reductase that provides resistance to thiol-specific stress caused by electrophilic quinones. Functionally, also exhibits azoreductase activity. Catalyzes the reductive cleavage of the azo bond in aromatic azo compounds to the corresponding amines. This chain is FMN-dependent NADH:quinone oxidoreductase, found in Sinorhizobium fredii (strain NBRC 101917 / NGR234).